The sequence spans 147 residues: DNA-directed RNA polymerase subunit 6 homolog (147 aa).

The protein belongs to the archaeal RpoK/eukaryotic RPB6 RNA polymerase subunit family. In terms of assembly, part of the viral DNA-directed RNA polymerase that consists of 8 polII-like subunits (RPB1, RPB2, RPB3, RPB5, RPB6, RPB7, RPB9, RPB10), a capping enzyme and a termination factor.

The protein resides in the host cytoplasm. It localises to the virion. Component of the DNA-directed RNA polymerase (RNAP) that catalyzes the transcription in the cytoplasm of viral DNA into RNA using the four ribonucleoside triphosphates as substrates. The protein is DNA-directed RNA polymerase subunit 6 homolog of Ornithodoros (relapsing fever ticks).